A 492-amino-acid polypeptide reads, in one-letter code: RNA-binding protein Nova-2 (492 aa).

The Bipartite nuclear localization signal motif lies at 10–26 (KRPLETPPEVVCTKRSN). In terms of domain architecture, KH 1 spans 32–99 (EYFLKVLIPS…EALNAVHSFI (68 aa)). A Glycyl lysine isopeptide (Lys-Gly) (interchain with G-Cter in SUMO2) cross-link involves residue K112. 2 KH domains span residues 130-196 (AKQA…VSAI) and 406-473 (KELV…QYLI).

As to quaternary structure, interacts with PTBP2; the interaction is direct. Brain. Expression restricted to astrocytes.

It is found in the nucleus. Functionally, functions to regulate alternative splicing in neurons by binding pre-mRNA in a sequence-specific manner to activate exon inclusion or exclusion. It binds specifically to the sequences 5'-YCAY-3' and regulates splicing in only a subset of regulated exons. Binding to an exonic 5'-YCAY-3' cluster changes the protein complexes assembled on pre-mRNA, blocking U1 snRNP binding and exon inclusion, whereas binding to an intronic 5'-YCAY-3' cluster enhances spliceosome assembly and exon inclusion. With NOVA1, they perform unique biological functions in different brain areas and cell types. Uniquely regulates alternative splicing events of a series of axon guidance related genes during cortical development, being essential for central nervous system development by regulating neural networks wiring. Regulates differentially alternative splicing on the same transcripts expressed in different neurons. This includes functional differences in transcripts expressed in cortical and cerebellar excitatory versus inhibitory neurons where is required for, respectively, development of laminar structure and motor coordination and synapse formation. Also the regulation the regulation of intron retention can sequester the trans-acting splicing factor PTBP2, acting as a variable cis-acting scaffolding platform for PTBP2 across various natural conditions. The sequence is that of RNA-binding protein Nova-2 from Homo sapiens (Human).